The sequence spans 436 residues: L-threonine dehydratase biosynthetic IlvA (436 aa).

A catalytic region spans residues 1 to 357 (MSETYVSEKS…HRGLKHYFLV (357 aa)). The residue at position 70 (lysine 70) is an N6-(pyridoxal phosphate)lysine. Pyridoxal 5'-phosphate-binding positions include asparagine 97, 203-207 (GGGGL), and serine 329. The region spanning 353–427 (HYFLVNFPQK…SAIDSRRLEP (75 aa)) is the ACT-like domain. The tract at residues 358-436 (NFPQKPGQLR…PGTPEYEYLT (79 aa)) is regulatory.

Belongs to the serine/threonine dehydratase family. Homotetramer. Pyridoxal 5'-phosphate is required as a cofactor.

The catalysed reaction is L-threonine = 2-oxobutanoate + NH4(+). It participates in amino-acid biosynthesis; L-isoleucine biosynthesis; 2-oxobutanoate from L-threonine: step 1/1. Catalyzes the anaerobic formation of alpha-ketobutyrate and ammonia from threonine in a two-step reaction. The first step involved a dehydration of threonine and a production of enamine intermediates (aminocrotonate), which tautomerizes to its imine form (iminobutyrate). Both intermediates are unstable and short-lived. The second step is the nonenzymatic hydrolysis of the enamine/imine intermediates to form 2-ketobutyrate and free ammonia. In the low water environment of the cell, the second step is accelerated by RidA. This chain is L-threonine dehydratase biosynthetic IlvA (ilvA), found in Corynebacterium glutamicum (strain ATCC 13032 / DSM 20300 / JCM 1318 / BCRC 11384 / CCUG 27702 / LMG 3730 / NBRC 12168 / NCIMB 10025 / NRRL B-2784 / 534).